Here is a 347-residue protein sequence, read N- to C-terminus: GDT1-like protein 2, chloroplastic (347 aa).

A chloroplast-targeting transit peptide spans 1–12; sequence MATAISVGVAVP. A disordered region spans residues 70 to 97; it reads EAGSHGEHLDSSATRDSNKPTKPPSGSR. The next 7 helical transmembrane spans lie at 99 to 119, 124 to 144, 165 to 185, 196 to 216, 257 to 277, 299 to 319, and 327 to 347; these read PQSIAAVLLLCALASAFIVFF, SAVVAMLAKSGFTAAFTLIFV, ALVLLGSMAALSLMTIVSVII, FQTTLPIGEYAAIALLAFFGF, LTSPLEVLWKSFSLVFFAEWG, GAIAGHLVATFLAIVGGAFLA, and VGLIGGVLFLLFAVATFFGVF.

This sequence belongs to the GDT1 family.

The protein resides in the plastid. Its subcellular location is the chloroplast membrane. The polypeptide is GDT1-like protein 2, chloroplastic (Oryza sativa subsp. japonica (Rice)).